The chain runs to 186 residues: uncharacterized protein (186 aa).

N34 carries an N-linked (GlcNAc...) asparagine; by host glycan. A run of 3 helical transmembrane segments spans residues 47-67, 114-134, and 144-164; these read IGMVVSSLMLLLVYFCFATTF, ILETVGFGLLHLKIALVIVLL, and LEMIYNKIVYFDTIGFYTLFF.

The protein resides in the membrane. This is an uncharacterized protein from Acanthamoeba polyphaga mimivirus (APMV).